A 236-amino-acid chain; its full sequence is uncharacterized protein (236 aa).

Residues 1 to 17 are compositionally biased toward polar residues; that stretch reads MSVSSLLQPNTYNINSK. The disordered stretch occupies residues 1–94; it reads MSVSSLLQPN…GVKGTTGGTI (94 aa). Low complexity predominate over residues 18–35; that stretch reads SQSLSNTPSNPTSQTNTL. Positions 58 to 91 constitute a Collagen-like domain; it reads GPSGPKGDKGDPGSKGETGSQGIKGDPGVKGTTG.

The protein belongs to the sputnik virus V6 family.

This is an uncharacterized protein from Sputnik virophage.